Here is a 568-residue protein sequence, read N- to C-terminus: Autophagy-related protein 17 (568 aa).

Disordered regions lie at residues 1-59 (MASF…DSSE) and 522-568 (SYEM…ERPF). Positions 522 to 546 (SYEMEAHGEPENEGKVETAYERETE) are enriched in basic and acidic residues.

Belongs to the ATG17 family.

The protein resides in the cytoplasm. The protein localises to the preautophagosomal structure membrane. Its function is as follows. Autophagy-specific protein that functions in response to autophagy-inducing signals as a scaffold to recruit other ATG proteins to organize pre-autophagosomal structure (PAS) formation. Modulates the timing and magnitude of the autophagy response, such as the size of the sequestering vesicles. Plays particularly a role in pexophagy and nucleophagy. The chain is Autophagy-related protein 17 (apg-9) from Neurospora crassa (strain ATCC 24698 / 74-OR23-1A / CBS 708.71 / DSM 1257 / FGSC 987).